Consider the following 246-residue polypeptide: Myogenic factor 5 (246 aa).

Residues 1-38 (RVRARIPGLSSPEGEFPEDFEPRELPPFGAPAPTEPAC) are disordered. A bHLH domain is found at 73–124 (DRRKAATMRERRRLKKVNQAFETLKRCTTANPNQRLPKVEILRNAIRYIESL). Residues 210 to 246 (EEPGLPLRHAGSLSPGASIDSGARTPGSPPPRTYQAL) are disordered. Pro residues predominate over residues 236–246 (GSPPPRTYQAL).

Efficient DNA binding requires dimerization with another bHLH protein.

The protein localises to the nucleus. Its function is as follows. Acts as a transcriptional activator that promotes transcription of muscle-specific target genes and plays a role in muscle differentiation. Induces fibroblasts to differentiate into myoblasts. Probable sequence specific DNA-binding protein. This is Myogenic factor 5 (MYF5) from Coturnix japonica (Japanese quail).